Consider the following 329-residue polypeptide: Major outer membrane protein P.IB (329 aa).

An N-terminal signal peptide occupies residues 1–19; that stretch reads MKKSLIALTLAALPVAAMA.

The protein belongs to the Gram-negative porin family. As to quaternary structure, homotrimer.

The protein resides in the cell outer membrane. Functionally, serves as a slightly cation selective porin. This Neisseria meningitidis serogroup A / serotype 4A (strain DSM 15465 / Z2491) protein is Major outer membrane protein P.IB (porB).